The chain runs to 282 residues: 4-hydroxybenzoate octaprenyltransferase (282 aa).

A run of 9 helical transmembrane segments spans residues 17 to 37, 40 to 60, 90 to 110, 113 to 133, 135 to 155, 163 to 183, 207 to 227, 231 to 251, and 262 to 282; these read IGIL…NQGF, IDLL…GCVI, AFIL…KLPI, FYFA…KRFF, APQL…FIAS, FIVL…MYAM, LIIA…AINK, CFFY…LKLI, and AFLV…LALI.

It belongs to the UbiA prenyltransferase family. Requires Mg(2+) as cofactor.

The protein resides in the cell inner membrane. The catalysed reaction is all-trans-octaprenyl diphosphate + 4-hydroxybenzoate = 4-hydroxy-3-(all-trans-octaprenyl)benzoate + diphosphate. Its pathway is cofactor biosynthesis; ubiquinone biosynthesis. Functionally, catalyzes the prenylation of para-hydroxybenzoate (PHB) with an all-trans polyprenyl group. Mediates the second step in the final reaction sequence of ubiquinone-8 (UQ-8) biosynthesis, which is the condensation of the polyisoprenoid side chain with PHB, generating the first membrane-bound Q intermediate 3-octaprenyl-4-hydroxybenzoate. In Legionella pneumophila (strain Lens), this protein is 4-hydroxybenzoate octaprenyltransferase.